A 402-amino-acid chain; its full sequence is Argininosuccinate synthase (402 aa).

7–15 (LYSGGLDTS) serves as a coordination point for ATP. Position 83 (tyrosine 83) interacts with L-citrulline. Residue glycine 113 coordinates ATP. L-aspartate contacts are provided by threonine 115, asparagine 119, and aspartate 120. Asparagine 119 contributes to the L-citrulline binding site. L-citrulline contacts are provided by arginine 123, serine 169, serine 178, glutamate 253, and tyrosine 265.

It belongs to the argininosuccinate synthase family. Type 1 subfamily. In terms of assembly, homotetramer.

It is found in the cytoplasm. The catalysed reaction is L-citrulline + L-aspartate + ATP = 2-(N(omega)-L-arginino)succinate + AMP + diphosphate + H(+). The protein operates within amino-acid biosynthesis; L-arginine biosynthesis; L-arginine from L-ornithine and carbamoyl phosphate: step 2/3. This chain is Argininosuccinate synthase, found in Thermoplasma acidophilum (strain ATCC 25905 / DSM 1728 / JCM 9062 / NBRC 15155 / AMRC-C165).